The chain runs to 532 residues: CTP synthase (532 aa).

The segment at 1–267 (MTKFIFVTGG…DDIVLKILGL (267 aa)) is amidoligase domain. Ser13 lines the CTP pocket. Ser13 contacts UTP. 14 to 19 (SLGKGI) lines the ATP pocket. Residue Tyr54 coordinates L-glutamine. Asp71 contacts ATP. 2 residues coordinate Mg(2+): Asp71 and Glu141. Residues 148-150 (DIE), 188-193 (KTKPTQ), and Lys224 each bind CTP. UTP-binding positions include 188–193 (KTKPTQ) and Lys224. The Glutamine amidotransferase type-1 domain maps to 292-532 (EIAIVGKYVE…EFVKATLANR (241 aa)). Gly354 is an L-glutamine binding site. Cys381 (nucleophile; for glutamine hydrolysis) is an active-site residue. Residues 382–385 (LGMQ), Glu405, and Arg462 contribute to the L-glutamine site. Active-site residues include His507 and Glu509.

It belongs to the CTP synthase family. Homotetramer.

The catalysed reaction is UTP + L-glutamine + ATP + H2O = CTP + L-glutamate + ADP + phosphate + 2 H(+). The enzyme catalyses L-glutamine + H2O = L-glutamate + NH4(+). It catalyses the reaction UTP + NH4(+) + ATP = CTP + ADP + phosphate + 2 H(+). Its pathway is pyrimidine metabolism; CTP biosynthesis via de novo pathway; CTP from UDP: step 2/2. Allosterically activated by GTP, when glutamine is the substrate; GTP has no effect on the reaction when ammonia is the substrate. The allosteric effector GTP functions by stabilizing the protein conformation that binds the tetrahedral intermediate(s) formed during glutamine hydrolysis. Inhibited by the product CTP, via allosteric rather than competitive inhibition. Its function is as follows. Catalyzes the ATP-dependent amination of UTP to CTP with either L-glutamine or ammonia as the source of nitrogen. Regulates intracellular CTP levels through interactions with the four ribonucleotide triphosphates. This Desulfitobacterium hafniense (strain Y51) protein is CTP synthase.